A 183-amino-acid polypeptide reads, in one-letter code: UPF0725 protein At4g11700 (183 aa).

Belongs to the UPF0725 (EMB2204) family.

This Arabidopsis thaliana (Mouse-ear cress) protein is UPF0725 protein At4g11700.